Reading from the N-terminus, the 376-residue chain is Phosphoserine aminotransferase (376 aa).

Arg46 lines the L-glutamate pocket. Pyridoxal 5'-phosphate-binding positions include 80–81 (AT), Phe104, Thr150, Asp172, and Gln195. The residue at position 196 (Lys196) is an N6-(pyridoxal phosphate)lysine. Position 247–248 (247–248 (NT)) interacts with pyridoxal 5'-phosphate.

Belongs to the class-V pyridoxal-phosphate-dependent aminotransferase family. SerC subfamily. In terms of assembly, homodimer. Requires pyridoxal 5'-phosphate as cofactor.

It localises to the cytoplasm. It catalyses the reaction O-phospho-L-serine + 2-oxoglutarate = 3-phosphooxypyruvate + L-glutamate. It carries out the reaction 4-(phosphooxy)-L-threonine + 2-oxoglutarate = (R)-3-hydroxy-2-oxo-4-phosphooxybutanoate + L-glutamate. It functions in the pathway amino-acid biosynthesis; L-serine biosynthesis; L-serine from 3-phospho-D-glycerate: step 2/3. It participates in cofactor biosynthesis; pyridoxine 5'-phosphate biosynthesis; pyridoxine 5'-phosphate from D-erythrose 4-phosphate: step 3/5. Catalyzes the reversible conversion of 3-phosphohydroxypyruvate to phosphoserine and of 3-hydroxy-2-oxo-4-phosphonooxybutanoate to phosphohydroxythreonine. This chain is Phosphoserine aminotransferase, found in Corynebacterium glutamicum (strain R).